The primary structure comprises 310 residues: Porphobilinogen deaminase (310 aa).

Cys-236 carries the post-translational modification S-(dipyrrolylmethanemethyl)cysteine.

It belongs to the HMBS family. In terms of assembly, monomer. It depends on dipyrromethane as a cofactor.

It carries out the reaction 4 porphobilinogen + H2O = hydroxymethylbilane + 4 NH4(+). The protein operates within porphyrin-containing compound metabolism; protoporphyrin-IX biosynthesis; coproporphyrinogen-III from 5-aminolevulinate: step 2/4. Tetrapolymerization of the monopyrrole PBG into the hydroxymethylbilane pre-uroporphyrinogen in several discrete steps. The protein is Porphobilinogen deaminase of Nitratiruptor sp. (strain SB155-2).